A 1601-amino-acid chain; its full sequence is Ectopic P granules protein 5 (1601 aa).

The interval Met1–Leu109 is disordered. Positions Arg15 to Asp26 are enriched in basic and acidic residues.

The protein belongs to the EPG5 family.

The protein resides in the cytoplasm. Its function is as follows. Involved in autophagy. Has a role in the degradation of protein aggregates within autophagosomes. Essential for starvation-induced autotrophy and omegasome development. The protein is Ectopic P granules protein 5 (epg-5) of Caenorhabditis briggsae.